The following is a 601-amino-acid chain: Elongation factor 4 (601 aa).

The region spanning N6–H188 is the tr-type G domain. GTP-binding positions include D18–T23 and N135–D138.

This sequence belongs to the TRAFAC class translation factor GTPase superfamily. Classic translation factor GTPase family. LepA subfamily.

It localises to the cell inner membrane. The catalysed reaction is GTP + H2O = GDP + phosphate + H(+). In terms of biological role, required for accurate and efficient protein synthesis under certain stress conditions. May act as a fidelity factor of the translation reaction, by catalyzing a one-codon backward translocation of tRNAs on improperly translocated ribosomes. Back-translocation proceeds from a post-translocation (POST) complex to a pre-translocation (PRE) complex, thus giving elongation factor G a second chance to translocate the tRNAs correctly. Binds to ribosomes in a GTP-dependent manner. In Bartonella quintana (strain Toulouse) (Rochalimaea quintana), this protein is Elongation factor 4.